The following is a 386-amino-acid chain: Sulfate adenylyltransferase (386 aa).

The protein belongs to the sulfate adenylyltransferase family.

The catalysed reaction is sulfate + ATP + H(+) = adenosine 5'-phosphosulfate + diphosphate. Its pathway is sulfur metabolism; hydrogen sulfide biosynthesis; sulfite from sulfate: step 1/3. This is Sulfate adenylyltransferase from Persephonella marina (strain DSM 14350 / EX-H1).